Consider the following 193-residue polypeptide: Recombination protein RecR (193 aa).

The segment at 61–76 adopts a C4-type zinc-finger fold; the sequence is CASCNALSESEICEIC. A Toprim domain is found at 84 to 170; the sequence is SQLCMVLHPR…TFTKIAQGVP (87 aa).

It belongs to the RecR family.

In terms of biological role, may play a role in DNA repair. It seems to be involved in an RecBC-independent recombinational process of DNA repair. It may act with RecF and RecO. This Helicobacter pylori (strain Shi470) protein is Recombination protein RecR.